Consider the following 267-residue polypeptide: tRNA pseudouridine synthase A (267 aa).

D51 serves as the catalytic Nucleophile. Residue Y109 coordinates substrate.

Belongs to the tRNA pseudouridine synthase TruA family. In terms of assembly, homodimer.

The enzyme catalyses uridine(38/39/40) in tRNA = pseudouridine(38/39/40) in tRNA. Its function is as follows. Formation of pseudouridine at positions 38, 39 and 40 in the anticodon stem and loop of transfer RNAs. The polypeptide is tRNA pseudouridine synthase A (Staphylococcus aureus (strain Mu3 / ATCC 700698)).